A 426-amino-acid polypeptide reads, in one-letter code: Histidine--tRNA ligase (426 aa).

The protein belongs to the class-II aminoacyl-tRNA synthetase family.

Its subcellular location is the cytoplasm. The enzyme catalyses tRNA(His) + L-histidine + ATP = L-histidyl-tRNA(His) + AMP + diphosphate + H(+). This Saccharolobus solfataricus (strain ATCC 35092 / DSM 1617 / JCM 11322 / P2) (Sulfolobus solfataricus) protein is Histidine--tRNA ligase.